We begin with the raw amino-acid sequence, 126 residues long: Protein K7 (126 aa).

Residues 24–44 (LPLHLWILCSLLAFLPLLVFI) traverse the membrane as a helical segment.

As to quaternary structure, interacts with host CAMLG; this interaction allows efficient apoptosis inhibition. Additionally, interacts with vGPCR/ORF74 and induces its proteasomeal degradation.

The protein localises to the host membrane. The protein resides in the host mitochondrion. In terms of biological role, plays a role in the inhibition of host apoptosis to allow completion of the viral lytic replication and may thus favor the maintenance of persistent infection in infected host. In Homo sapiens (Human), this protein is Protein K7 (K7).